Reading from the N-terminus, the 586-residue chain is Phosphomethylpyrimidine synthase (586 aa).

Disordered stretches follow at residues 38–59 (IELSDTNGVPNSPIRVYDTSGP) and 92–114 (GREIKPEDDGVKAASNHTPVFPQ). A compositionally biased stretch (basic and acidic residues) spans 92–102 (GREIKPEDDGV). Residues Asn193, Met222, Tyr251, His287, 307 to 309 (SRG), 348 to 351 (DGLR), and Glu387 each bind substrate. His391 is a Zn(2+) binding site. Tyr414 is a substrate binding site. A Zn(2+)-binding site is contributed by His455. Residues Cys535, Cys538, and Cys543 each coordinate [4Fe-4S] cluster.

It belongs to the ThiC family. [4Fe-4S] cluster is required as a cofactor.

The catalysed reaction is 5-amino-1-(5-phospho-beta-D-ribosyl)imidazole + S-adenosyl-L-methionine = 4-amino-2-methyl-5-(phosphooxymethyl)pyrimidine + CO + 5'-deoxyadenosine + formate + L-methionine + 3 H(+). It participates in cofactor biosynthesis; thiamine diphosphate biosynthesis. Catalyzes the synthesis of the hydroxymethylpyrimidine phosphate (HMP-P) moiety of thiamine from aminoimidazole ribotide (AIR) in a radical S-adenosyl-L-methionine (SAM)-dependent reaction. This Bacillus cytotoxicus (strain DSM 22905 / CIP 110041 / 391-98 / NVH 391-98) protein is Phosphomethylpyrimidine synthase.